We begin with the raw amino-acid sequence, 136 residues long: Large ribosomal subunit protein uL16 (136 aa).

The protein belongs to the universal ribosomal protein uL16 family. Part of the 50S ribosomal subunit.

Its function is as follows. Binds 23S rRNA and is also seen to make contacts with the A and possibly P site tRNAs. This Rickettsia africae (strain ESF-5) protein is Large ribosomal subunit protein uL16.